Consider the following 387-residue polypeptide: Alpha-maltose-1-phosphate synthase (387 aa).

Belongs to the glycosyltransferase group 1 family.

It catalyses the reaction ADP-alpha-D-glucose + alpha-D-glucose 1-phosphate = alpha-maltose 1-phosphate + ADP + H(+). Its pathway is capsule biogenesis; capsule polysaccharide biosynthesis. It functions in the pathway glycan biosynthesis; glycogen biosynthesis. In terms of biological role, involved in the biosynthesis of the maltose-1-phosphate (M1P) building block required for alpha-glucan production by the key enzyme GlgE. Catalyzes the formation of an alpha-1,4 linkage between glucose from ADP-glucose and glucose 1-phosphate (G1P) to yield maltose-1-phosphate (M1P). The polypeptide is Alpha-maltose-1-phosphate synthase (Mycobacterium tuberculosis (strain CDC 1551 / Oshkosh)).